The sequence spans 284 residues: D-tagatose-1,6-bisphosphate aldolase subunit GatY (284 aa).

Residue Asp82 is the Proton donor of the active site. His83 and His180 together coordinate Zn(2+). A dihydroxyacetone phosphate-binding site is contributed by Gly181. A Zn(2+)-binding site is contributed by His208. Dihydroxyacetone phosphate is bound by residues 209 to 211 (GAS) and 230 to 233 (NVAT).

This sequence belongs to the class II fructose-bisphosphate aldolase family. TagBP aldolase GatY subfamily. Forms a complex with GatZ. It depends on Zn(2+) as a cofactor.

It catalyses the reaction D-tagatofuranose 1,6-bisphosphate = D-glyceraldehyde 3-phosphate + dihydroxyacetone phosphate. It functions in the pathway carbohydrate metabolism; D-tagatose 6-phosphate degradation; D-glyceraldehyde 3-phosphate and glycerone phosphate from D-tagatose 6-phosphate: step 2/2. In terms of biological role, catalytic subunit of the tagatose-1,6-bisphosphate aldolase GatYZ, which catalyzes the reversible aldol condensation of dihydroxyacetone phosphate (DHAP or glycerone-phosphate) with glyceraldehyde 3-phosphate (G3P) to produce tagatose 1,6-bisphosphate (TBP). Requires GatZ subunit for full activity and stability. Is involved in the catabolism of galactitol. The polypeptide is D-tagatose-1,6-bisphosphate aldolase subunit GatY (Shigella flexneri).